The following is a 118-amino-acid chain: Basic phospholipase A2 PA-5 (118 aa).

7 disulfide bridges follow: Cys-11–Cys-71, Cys-27–Cys-117, Cys-29–Cys-45, Cys-44–Cys-98, Cys-51–Cys-91, Cys-60–Cys-84, and Cys-78–Cys-89. Residues Tyr-28, Gly-30, and Gly-32 each coordinate Ca(2+). The active site involves His-48. Asp-49 is a Ca(2+) binding site. Residue Asp-92 is part of the active site.

The protein belongs to the phospholipase A2 family. Group I subfamily. D49 sub-subfamily. The cofactor is Ca(2+). Expressed by the venom gland.

It is found in the secreted. The catalysed reaction is a 1,2-diacyl-sn-glycero-3-phosphocholine + H2O = a 1-acyl-sn-glycero-3-phosphocholine + a fatty acid + H(+). Functionally, PLA2 catalyzes the calcium-dependent hydrolysis of the 2-acyl groups in 3-sn-phosphoglycerides. This chain is Basic phospholipase A2 PA-5, found in Pseudechis australis (Mulga snake).